The chain runs to 145 residues: CASP-like protein SELMODRAFT_406854 (145 aa).

Residues 1-31 (MGVASQSSVANEAGAAPEASIQQTLRGFSSP) lie on the Cytoplasmic side of the membrane. Residues 32-52 (TSLLLRIATAVLCTLTLAFLV) traverse the membrane as a helical segment. Residues 53-75 (TSKERKEIASIDIVAIWSNSKAL) are Extracellular-facing. A helical transmembrane segment spans residues 76–96 (IFLAVVSGICLGYSLLHAAVF). The Cytoplasmic portion of the chain corresponds to 97–112 (LVMLSGNRKPLARKKA). Residues 113–133 (LDWMVFLADQVFFKIFCWFSI) form a helical membrane-spanning segment. The Extracellular segment spans residues 134–145 (RVSSRRSKAGFV).

Belongs to the Casparian strip membrane proteins (CASP) family. Homodimer and heterodimers.

The protein localises to the cell membrane. This is CASP-like protein SELMODRAFT_406854 from Selaginella moellendorffii (Spikemoss).